Reading from the N-terminus, the 302-residue chain is N-acetylmuramic acid 6-phosphate etherase (302 aa).

Residues 57 to 220 (IADRFRSNGR…TTGAMIRIGK (164 aa)) enclose the SIS domain. Residue E85 is the Proton donor of the active site. E116 is an active-site residue.

Belongs to the GCKR-like family. MurNAc-6-P etherase subfamily. As to quaternary structure, homodimer.

The catalysed reaction is N-acetyl-D-muramate 6-phosphate + H2O = N-acetyl-D-glucosamine 6-phosphate + (R)-lactate. Its pathway is amino-sugar metabolism; N-acetylmuramate degradation. In terms of biological role, specifically catalyzes the cleavage of the D-lactyl ether substituent of MurNAc 6-phosphate, producing GlcNAc 6-phosphate and D-lactate. This is N-acetylmuramic acid 6-phosphate etherase from Rhodopirellula baltica (strain DSM 10527 / NCIMB 13988 / SH1).